Reading from the N-terminus, the 103-residue chain is uncharacterized protein (103 aa).

This is an uncharacterized protein from Pseudescherichia vulneris (Escherichia vulneris).